A 169-amino-acid chain; its full sequence is Desumoylating isopeptidase 1 (169 aa).

One can recognise a PPPDE domain in the interval 8–150; the sequence is HLVRLYVYDM…LGQALRPLLD (143 aa). Histidine 39 is a catalytic residue. The Nuclear export signal 1 signature appears at 84 to 92; it reads IFLEYLSSL. Cysteine 109 is an active-site residue. A Nuclear export signal 2 motif is present at residues 140 to 154; it reads PLGQALRPLLDSVQI.

It belongs to the DeSI family. As to quaternary structure, homodimer.

Its subcellular location is the cytoplasm. It localises to the nucleus. The enzyme catalyses S-hexadecanoyl-L-cysteinyl-[protein] + H2O = L-cysteinyl-[protein] + hexadecanoate + H(+). Functionally, protease which deconjugates SUMO1, SUMO2 and SUMO3 from some substrate proteins. Has isopeptidase but not SUMO-processing activity. Collaborates with ubqln4 in the export of ubiquitinated proteins from the nucleus to the cytoplasm. Exhibits palmitoyl protein thioesterase (S-depalmitoylation) activity towards synthetic substrates 4-methylumbelliferyl-6-S-palmitoyl-beta-D-glucopyranoside and S-depalmitoylation probe 5 (DPP-5). The sequence is that of Desumoylating isopeptidase 1 from Xenopus laevis (African clawed frog).